The sequence spans 251 residues: MNDFVFSDIPDNVKPMASVEFDDPLTIATGDVLNWTLWLTRNFPALSSIIMRLPSSLVSMVTSSFEGANQMVQVKTSTHNLYSLSLPTHARKQIISQLVEHEKNHIGPKSKDCVMQRLLNAHRDSESKISIPTPDATLRSEAVGFTLAGTADPPNILALGTFMAARDSEMQKGLYKELKAIWPDLRSPAPSYNLLHQLPLLRGIIKESIRFTHGVATGPARLVGAGGARIGGYNVPAKASSFSAAATSDCS.

Residue Cys-250 coordinates heme.

This sequence belongs to the cytochrome P450 family. Requires heme as cofactor.

It participates in secondary metabolite biosynthesis. Cytochrome P450 monooxygenase; part of the gene cluster that mediates the biosynthesis of pyrrolopyrazines, secondary metabolites showing insecticidal activity. The role of ppzG within the pathway has still to be determined. The single multifunctional NRPS ppzA is sufficient to produce peramine via condensation of 1-pyrroline-5-carboxylate and arginine, N-methylation of the alpha-amino group of arginine and reduction of the thioester and the cyclization to form an iminium ion resulting in release from the peptide synthetase. Deprotonation of this intermediate and oxidation of the pyrroline ring would give rise to peramine. In Epichloe species that produce only peramine, the peramine synthetase gene is not localized in a gene cluster, in contrast to Metarhizium species that contain additional pyrrolopyrazine biosynthesis genes. The 2-oxoglutarate-Fe(II) type oxidoreductase ppzC hydroxylates peramine to yield the newly identified compound 8-hydroxyperamine whereas ppzD converts L-proline into trans-4-hydroxy-L-proline, a precursor of peramine biosynthesis. The polypeptide is Cytochrome P450 monooxygenase ppzG (Metarhizium rileyi (strain RCEF 4871) (Nomuraea rileyi)).